Reading from the N-terminus, the 141-residue chain is Nucleoside diphosphate kinase (141 aa).

ATP is bound by residues Lys11, Phe59, Arg87, Thr93, Arg104, and Asn114. The active-site Pros-phosphohistidine intermediate is His117.

Belongs to the NDK family. Homotetramer. Requires Mg(2+) as cofactor.

Its subcellular location is the cytoplasm. It catalyses the reaction a 2'-deoxyribonucleoside 5'-diphosphate + ATP = a 2'-deoxyribonucleoside 5'-triphosphate + ADP. It carries out the reaction a ribonucleoside 5'-diphosphate + ATP = a ribonucleoside 5'-triphosphate + ADP. In terms of biological role, major role in the synthesis of nucleoside triphosphates other than ATP. The ATP gamma phosphate is transferred to the NDP beta phosphate via a ping-pong mechanism, using a phosphorylated active-site intermediate. The sequence is that of Nucleoside diphosphate kinase from Pseudomonas putida (strain W619).